The sequence spans 114 residues: MADRVLRGSRLGAVSYETDRNHDLAPRQVARYRTDNGEEFDVPFADDAEIPGTWLCRNGLEGTLIEGDVPEPKKVKPPRTHWDMLLERRSVEELEELLKERLDLIKAKRRGTGS.

Belongs to the RNA polymerase-binding protein RbpA family. Monomer. Forms a complex with the RNAP catalytic core, specifically with the beta subunit (RpoB); its binding site may overlap with that of Rif. May bind free principal sigma factors.

Binds to RNA polymerase (RNAP), probably stimulating transcriptions from principal, but not alternative sigma factor promoters. Partially restores transcription in the presence of rifampicin (Rif) in vitro; overexpression leads to an increase in the Rif tolerance in vivo, with smaller colonies. Seems to act by removing Rif from its binding site and preventing its further binding. No longer stimulates transcription in Rif-resistant RNA polymerase (with mutations in rpoB). The protein is RNA polymerase-binding protein RbpA of Mycolicibacterium smegmatis (strain ATCC 700084 / mc(2)155) (Mycobacterium smegmatis).